The following is a 102-amino-acid chain: MAAPRQIAFYGKGGTGKPKRKPEPVTASKEDRCLGSPSKNKAHFHSRMNVMARMRGGHGFRVPSAASRKAMKHKWKGQPLPKKALILLEGTKMGTGQPPVAS.

Residues 1–41 form a disordered region; the sequence is MAAPRQIAFYGKGGTGKPKRKPEPVTASKEDRCLGSPSKNK.

This sequence to the N-terminal of nitrogenase iron protein (NifH). Has lost the ATP-binding site.

In terms of biological role, this protein is either not expressed, expressed at low levels or rapidly degraded. This is an uncharacterized protein from Rhizobium meliloti (Ensifer meliloti).